We begin with the raw amino-acid sequence, 339 residues long: Anthranilate phosphoribosyltransferase (339 aa).

Residues glycine 86, 89–90 (GD), threonine 94, 96–99 (NIST), 114–122 (KHGNRGVSS), and serine 126 contribute to the 5-phospho-alpha-D-ribose 1-diphosphate site. An anthranilate-binding site is contributed by glycine 86. Serine 98 provides a ligand contact to Mg(2+). Asparagine 117 provides a ligand contact to anthranilate. Arginine 172 contacts anthranilate. Positions 230 and 231 each coordinate Mg(2+).

Belongs to the anthranilate phosphoribosyltransferase family. As to quaternary structure, homodimer. Requires Mg(2+) as cofactor.

It carries out the reaction N-(5-phospho-beta-D-ribosyl)anthranilate + diphosphate = 5-phospho-alpha-D-ribose 1-diphosphate + anthranilate. Its pathway is amino-acid biosynthesis; L-tryptophan biosynthesis; L-tryptophan from chorismate: step 2/5. Functionally, catalyzes the transfer of the phosphoribosyl group of 5-phosphorylribose-1-pyrophosphate (PRPP) to anthranilate to yield N-(5'-phosphoribosyl)-anthranilate (PRA). In Photobacterium profundum (strain SS9), this protein is Anthranilate phosphoribosyltransferase.